The following is a 515-amino-acid chain: GMP synthase [glutamine-hydrolyzing] (515 aa).

The region spanning 10–200 (TIIVLDFGSQ…VFGVCGCSEG (191 aa)) is the Glutamine amidotransferase type-1 domain. Cys-87 acts as the Nucleophile in catalysis. Active-site residues include His-174 and Glu-176. In terms of domain architecture, GMPS ATP-PPase spans 201–390 (WNMENFIEVE…LGIPDEIVWR (190 aa)). Residue 228-234 (SGGVDSS) coordinates ATP.

Homodimer.

It carries out the reaction XMP + L-glutamine + ATP + H2O = GMP + L-glutamate + AMP + diphosphate + 2 H(+). It functions in the pathway purine metabolism; GMP biosynthesis; GMP from XMP (L-Gln route): step 1/1. Its function is as follows. Catalyzes the synthesis of GMP from XMP. In Bacillus thuringiensis subsp. konkukian (strain 97-27), this protein is GMP synthase [glutamine-hydrolyzing].